Consider the following 205-residue polypeptide: Holliday junction resolvase RecU (205 aa).

Residues methionine 1 to serine 26 form a disordered region. Positions 86, 88, 101, and 120 each coordinate Mg(2+).

Belongs to the RecU family. The cofactor is Mg(2+).

The protein resides in the cytoplasm. It carries out the reaction Endonucleolytic cleavage at a junction such as a reciprocal single-stranded crossover between two homologous DNA duplexes (Holliday junction).. Endonuclease that resolves Holliday junction intermediates in genetic recombination. Cleaves mobile four-strand junctions by introducing symmetrical nicks in paired strands. Promotes annealing of linear ssDNA with homologous dsDNA. Required for DNA repair, homologous recombination and chromosome segregation. This is Holliday junction resolvase RecU from Bacillus pumilus (strain SAFR-032).